The chain runs to 457 residues: Argininosuccinate lyase (457 aa).

The protein belongs to the lyase 1 family. Argininosuccinate lyase subfamily.

It is found in the cytoplasm. It carries out the reaction 2-(N(omega)-L-arginino)succinate = fumarate + L-arginine. It participates in amino-acid biosynthesis; L-arginine biosynthesis; L-arginine from L-ornithine and carbamoyl phosphate: step 3/3. The chain is Argininosuccinate lyase from Shigella sonnei (strain Ss046).